The following is a 428-amino-acid chain: 3-phosphoshikimate 1-carboxyvinyltransferase (428 aa).

Residues lysine 20, serine 21, and arginine 25 each coordinate 3-phosphoshikimate. Phosphoenolpyruvate is bound at residue lysine 20. Residues glycine 92 and arginine 120 each contribute to the phosphoenolpyruvate site. The 3-phosphoshikimate site is built by serine 166, glutamine 168, aspartate 314, and lysine 341. Glutamine 168 is a binding site for phosphoenolpyruvate. Residue aspartate 314 is the Proton acceptor of the active site. Phosphoenolpyruvate contacts are provided by arginine 345 and arginine 387.

Belongs to the EPSP synthase family. In terms of assembly, monomer.

The protein resides in the cytoplasm. The catalysed reaction is 3-phosphoshikimate + phosphoenolpyruvate = 5-O-(1-carboxyvinyl)-3-phosphoshikimate + phosphate. It functions in the pathway metabolic intermediate biosynthesis; chorismate biosynthesis; chorismate from D-erythrose 4-phosphate and phosphoenolpyruvate: step 6/7. Its function is as follows. Catalyzes the transfer of the enolpyruvyl moiety of phosphoenolpyruvate (PEP) to the 5-hydroxyl of shikimate-3-phosphate (S3P) to produce enolpyruvyl shikimate-3-phosphate and inorganic phosphate. In Listeria welshimeri serovar 6b (strain ATCC 35897 / DSM 20650 / CCUG 15529 / CIP 8149 / NCTC 11857 / SLCC 5334 / V8), this protein is 3-phosphoshikimate 1-carboxyvinyltransferase.